A 468-amino-acid chain; its full sequence is Probable protein phosphatase 2C 52 (468 aa).

The PPM-type phosphatase domain maps to 67 to 372; it reads SSCIFTQQGR…DDCAVVCLFL (306 aa). Positions 102, 103, 317, and 363 each coordinate Mn(2+). A compositionally biased stretch (polar residues) spans 413–429; it reads RSSSDQENETYGNVNTE. The interval 413-442 is disordered; it reads RSSSDQENETYGNVNTETDAEDEKTVGDQN.

The protein belongs to the PP2C family. Mg(2+) serves as cofactor. Requires Mn(2+) as cofactor.

It catalyses the reaction O-phospho-L-seryl-[protein] + H2O = L-seryl-[protein] + phosphate. It carries out the reaction O-phospho-L-threonyl-[protein] + H2O = L-threonyl-[protein] + phosphate. This Arabidopsis thaliana (Mouse-ear cress) protein is Probable protein phosphatase 2C 52.